Reading from the N-terminus, the 1032-residue chain is Integrin alpha-4 (1032 aa).

The N-terminal stretch at 1-33 (MAWEARREPGPRRAAVRETVMLLLCLGVPTGRP) is a signal peptide. FG-GAP repeat units follow at residues 35 to 100 (NVDT…PGQT), 110 to 177 (NGEP…TELS), 185 to 237 (QDYV…KYKA), 238 to 291 (FLDK…EKEL), 292 to 351 (NILH…GAVM), 355 to 412 (ETNL…GISS), and 416 to 478 (QRIE…HPES). Residues 35 to 977 (NVDTESALLY…HHQRPKRYFT (943 aa)) are Extracellular-facing. Residue N79 is glycosylated (N-linked (GlcNAc...) asparagine). C91 and C101 are oxidised to a cystine. N138 is a glycosylation site (N-linked (GlcNAc...) asparagine). Cystine bridges form between C144–C165 and C183–C198. N229 carries an N-linked (GlcNAc...) asparagine glycan. Ca(2+) contacts are provided by D314, N316, D318, D322, D377, D379, D381, D385, D439, D441, N443, Y445, and D447. An N-linked (GlcNAc...) asparagine glycan is attached at N480. 2 disulfides stabilise this stretch: C486–C495 and C501–C557. N-linked (GlcNAc...) asparagine glycosylation is found at N518 and N538. An SG1 motif is present at residues 606–616 (KKEKDIMKKTI). C622 and C627 are joined by a disulfide. N626, N645, and N660 each carry an N-linked (GlcNAc...) asparagine glycan. An intrachain disulfide couples C698 to C711. N806 and N821 each carry an N-linked (GlcNAc...) asparagine glycan. Intrachain disulfides connect C852–C890 and C897–C902. Residues 978 to 1001 (IVIISSSLLLGLIVLLLISYVMWK) form a helical membrane-spanning segment. The Cytoplasmic segment spans residues 1002–1032 (AGFFKRQYKSILQEENRRDSWSYINSKSNDD). Residues 1003–1007 (GFFKR) carry the GFFKR motif motif. At S1021 the chain carries Phosphoserine.

Belongs to the integrin alpha chain family. As to quaternary structure, heterodimer of an alpha and a beta subunit. The alpha subunit can sometimes be cleaved into two non-covalently associated fragments. Alpha-4 associates with either beta-1 or beta-7. Alpha-4 interacts with PXN, LPXN, and TGFB1I1/HIC5. Interacts with CSPG4 through CSPG4 chondroitin sulfate glycosaminoglycan. Interacts with JAML; integrin alpha-4/beta-1 may regulate leukocyte to endothelial cells adhesion by controlling JAML homodimerization. ITGA4:ITGB1 is found in a ternary complex with CX3CR1 and CX3CL1. Interacts with MDK. ITGA4:ITGB1 interacts with MDK; this interaction mediates MDK-induced osteoblast cells migration through PXN phosphorylation. Integrin ITGA4:ITGB1 interacts with SVEP1 (via Sushi domain 21); thereby inhibits Ca(2+) intracellular signaling and as a result represses vasocontraction. ITGA4:ITGB1 interacts with SELP. ITGA4:ITGB1 interacts with BCAM. Post-translationally, phosphorylation on Ser-1027 inhibits PXN binding. Expressed in vascular smooth muscle cells (at protein level).

It localises to the membrane. Its function is as follows. Integrins alpha-4/beta-1 (VLA-4) and alpha-4/beta-7 are receptors for fibronectin. They recognize one or more domains within the alternatively spliced CS-1 and CS-5 regions of fibronectin. They are also receptors for VCAM1. Integrin alpha-4/beta-1 recognizes the sequence Q-I-D-S in VCAM1. Integrin alpha-4/beta-7 is also a receptor for MADCAM1. It recognizes the sequence L-D-T in MADCAM1. On activated endothelial cells integrin VLA-4 triggers homotypic aggregation for most VLA-4-positive leukocyte cell lines. It may also participate in cytolytic T-cell interactions with target cells. ITGA4:ITGB1 binds to fractalkine (CX3CL1) and may act as its coreceptor in CX3CR1-dependent fractalkine signaling. ITGA4:ITGB1 binds to PLA2G2A via a site (site 2) which is distinct from the classical ligand-binding site (site 1) and this induces integrin conformational changes and enhanced ligand binding to site 1. Integrin ITGA4:ITGB1 represses PRKCA-mediated L-type voltage-gated channel Ca(2+) influx and ROCK-mediated calcium sensitivity in vascular smooth muscle cells via its interaction with SVEP1, thereby inhibiting vasocontraction. The chain is Integrin alpha-4 (ITGA4) from Homo sapiens (Human).